Here is a 268-residue protein sequence, read N- to C-terminus: Enoyl-[acyl-carrier-protein] reductase [NADH] (268 aa).

NAD(+) is bound by residues 20 to 21, 64 to 65, and 95 to 96; these read SI, DV, and IA. Tyr157 contributes to the substrate binding site. Residues Lys164 and Ile193 each contribute to the NAD(+) site.

The protein belongs to the short-chain dehydrogenases/reductases (SDR) family. FabI subfamily. Homodimer. Homotetramer.

The enzyme catalyses a 2,3-saturated acyl-[ACP] + NAD(+) = a (2E)-enoyl-[ACP] + NADH + H(+). It catalyses the reaction a 2,3-saturated acyl-CoA + NAD(+) = a (2E)-enoyl-CoA + NADH + H(+). Its pathway is lipid metabolism; mycolic acid biosynthesis. In terms of biological role, enoyl-ACP reductase of the type II fatty acid syntase (FAS-II) system, which is involved in the biosynthesis of mycolic acids, a major component of mycobacterial cell walls. Catalyzes the NADH-dependent reduction of the double bond of 2-trans-enoyl-[acyl-carrier protein], an essential step in the fatty acid elongation cycle of the FAS-II pathway. Shows preference for long-chain fatty acyl thioester substrates, and can also use 2-trans-enoyl-CoAs as alternative substrates. The mycobacterial FAS-II system utilizes the products of the FAS-I system as primers to extend fatty acyl chain lengths up to C56, forming the meromycolate chain that serves as the precursor for final mycolic acids. In Mycobacterium avium, this protein is Enoyl-[acyl-carrier-protein] reductase [NADH].